The primary structure comprises 91 residues: Small ribosomal subunit protein bS18 (91 aa).

It belongs to the bacterial ribosomal protein bS18 family. Part of the 30S ribosomal subunit. Forms a tight heterodimer with protein bS6.

In terms of biological role, binds as a heterodimer with protein bS6 to the central domain of the 16S rRNA, where it helps stabilize the platform of the 30S subunit. This chain is Small ribosomal subunit protein bS18, found in Thiobacillus denitrificans (strain ATCC 25259 / T1).